Consider the following 137-residue polypeptide: Cytochrome b5 (137 aa).

Positions 6–82 constitute a Cytochrome b5 heme-binding domain; that stretch reads KKVYTLEEVA…MDEYYVGDID (77 aa). Histidine 41 and histidine 65 together coordinate heme. The helical transmembrane segment at 108-128 threads the bilayer; that stretch reads FIIKILQFLVPLAILGLAVAI.

It belongs to the cytochrome b5 family.

The protein resides in the endoplasmic reticulum membrane. It localises to the microsome membrane. Membrane bound hemoprotein which function as an electron carrier for several membrane bound oxygenases. This is Cytochrome b5 from Oryza sativa subsp. japonica (Rice).